Reading from the N-terminus, the 359-residue chain is ATP synthase subunit gamma, chloroplastic (359 aa).

Residues 1–35 constitute a chloroplast transit peptide; it reads MSCSHLSTAWSSSALASSASTTRRRSPPRSGLLVR. The active site involves C124. A disulfide bridge connects residues C234 and C240.

This sequence belongs to the ATPase gamma chain family. In terms of assembly, F-type ATPases have 2 components, CF(1) - the catalytic core - and CF(0) - the membrane proton channel. CF(1) has five subunits: alpha(3), beta(3), gamma(1), delta(1), epsilon(1). CF(0) has four main subunits: a, b, b' and c.

The protein resides in the plastid. It localises to the chloroplast thylakoid membrane. Functionally, produces ATP from ADP in the presence of a proton gradient across the membrane. The gamma chain is believed to be important in regulating ATPase activity and the flow of protons through the CF(0) complex. Inceptin is a proteolytic fragment produced by insect larvae that previously ingested the protein. This peptide mediate plant perception of herbivory through the induction of volatile, phenylpropanoid and protease inhibitor defenses such as ethylene, jasmonic acid and salicylic acid for example. This Zea mays (Maize) protein is ATP synthase subunit gamma, chloroplastic.